The chain runs to 390 residues: RNA binding protein fox-1 homolog 2 (390 aa).

The disordered stretch occupies residues 1 to 127 (MQNEPLTPGY…STPKRLHVSN (127 aa)). 2 stretches are compositionally biased toward polar residues: residues 18–28 (SQGNQEPTTTP) and 65–95 (GEHN…SLTT). The residue at position 67 (histidine 67) is a Phosphothreonine. Residues 97 to 117 (GGAQTDGQQSQTQSSENSESK) show a composition bias toward low complexity. Residues 121 to 197 (KRLHVSNIPF…RKIEVNNATA (77 aa)) enclose the RRM domain. Omega-N-methylarginine occurs at positions 249, 267, 268, 277, and 281. 2 positions are modified to asymmetric dimethylarginine: arginine 297 and arginine 329. Arginine 381 and arginine 386 each carry asymmetric dimethylarginine; alternate. An omega-N-methylarginine; alternate mark is found at arginine 381 and arginine 386.

As to quaternary structure, interacts with ER-alpha N-terminal activation domain. Interacts with RBPMS; the interaction allows cooperative assembly of stable cell-specific alternative splicing regulatory complexes.

It is found in the nucleus. The protein resides in the cytoplasm. Its function is as follows. RNA-binding protein that regulates alternative splicing events by binding to 5'-UGCAUGU-3' elements. Prevents binding of U2AF2 to the 3'-splice site. Regulates alternative splicing of tissue-specific exons and of differentially spliced exons during erythropoiesis. RNA-binding protein that seems to act as a coregulatory factor of ER-alpha. Together with RNA binding proteins RBPMS and MBNL1/2, activates vascular smooth muscle cells alternative splicing events. This is RNA binding protein fox-1 homolog 2 (RBFOX2) from Homo sapiens (Human).